The primary structure comprises 279 residues: Calcium-activated potassium channel subunit beta-3 (279 aa).

Residues 1–60 are Cytoplasmic-facing; it reads MDFSPSSELGFHFVAFILLTRHRTAFPASGKKRETDYSDGDPLDVHKRLPSSAGEDRAVM. The chain crosses the membrane as a helical span at residues 61 to 81; sequence LGFAMMGFSVLMFFLLGTTIL. The Extracellular segment spans residues 82 to 207; it reads KPFMLSIQRE…DVILIKKYDQ (126 aa). N-linked (GlcNAc...) asparagine glycosylation occurs at Asn-131. Residues 208 to 228 traverse the membrane as a helical segment; it reads MAIFHCLFWPSLTLLGGALIV. The Cytoplasmic segment spans residues 229 to 279; that stretch reads GMVRLTQHLSLLCEKYSTVVRDEVGGKVPYIEQHQFKLCIMRRSKGRAEKS.

This sequence belongs to the KCNMB (TC 8.A.14.1) family. KCNMB3 subfamily. As to quaternary structure, interacts with KCNMA1 tetramer. There are probably 4 molecules of KCMNB3 per KCNMA1 tetramer. N-glycosylated. Post-translationally, the extracellular domain contains disulfide bond essential for the gating mechanism. In terms of tissue distribution, isoform 1, isoform 3 and isoform 4 are widely expressed. Isoform 2 is expressed placenta, pancreas, kidney and heart. Isoform 1 and isoform 3 are highly expressed in pancreas and testis.

Its subcellular location is the membrane. In terms of biological role, regulatory subunit of the calcium activated potassium KCNMA1 (maxiK) channel. Modulates the calcium sensitivity and gating kinetics of KCNMA1, thereby contributing to KCNMA1 channel diversity. Alters the functional properties of the current expressed by the KCNMA1 channel. Isoform 2, isoform 3 and isoform 4 partially inactivate the current of KCNBMA. Isoform 4 induces a fast and incomplete inactivation of KCNMA1 channel that is detectable only at large depolarizations. In contrast, isoform 1 does not induce detectable inactivation of KCNMA1. Two or more subunits of KCNMB3 are required to block the KCNMA1 tetramer. This chain is Calcium-activated potassium channel subunit beta-3 (KCNMB3), found in Homo sapiens (Human).